The primary structure comprises 64 residues: Hypoxia-inducible lipid droplet-associated protein (64 aa).

A required for targeting to lipid droplets region spans residues Met1–Gly37. Residues Leu7 to Met24 form a helical membrane-spanning segment. The span at Thr42–Pro51 shows a compositional bias: polar residues. The disordered stretch occupies residues Thr42–Gln64. Basic and acidic residues predominate over residues Leu55–Gln64.

The protein localises to the lipid droplet. It is found in the secreted. Its subcellular location is the membrane. Functionally, increases intracellular lipid accumulation. Stimulates expression of cytokines including IL6, MIF and VEGFA. Enhances cell growth and proliferation. The chain is Hypoxia-inducible lipid droplet-associated protein (Hilpda) from Mus musculus (Mouse).